Consider the following 318-residue polypeptide: MMELRYNPLTDEWVIVSAATQKRPVQPSKTECPICVGGLELPEEYDLVTFENRYPSLKKDPPPVNWKEKGPFRKEESRGVCEVVVYTSDHNTALPGMPLKQIEKLVEMWVDRTRDLSQHDFVKYIFIFENRGKEVGASLPHPHGQIYAFPFLPKRIEVKIGAMRKWYEEKRKCPICEVLESEGEERKVYETEHFLALVPFYARFPYEVHIYPKRHVSTLLEFSKEEKKEFAKVLKVVTAKYDKLFDQEFPYMMMFFQAPFNEEDVSHFFHFHVEFNPPKRDRDKLKWMASVETGTWAFINPVVPEEAARQLRETEVEI.

3 residues coordinate Zn(2+): Cys-32, Cys-35, and His-90. Asn-130 serves as a coordination point for UDP-alpha-D-glucose. His-141 contacts Zn(2+). The active-site Tele-UMP-histidine intermediate is His-143. A UDP-alpha-D-glucose-binding site is contributed by Gln-145.

This sequence belongs to the galactose-1-phosphate uridylyltransferase type 1 family. Zn(2+) serves as cofactor.

The catalysed reaction is alpha-D-galactose 1-phosphate + UDP-alpha-D-glucose = alpha-D-glucose 1-phosphate + UDP-alpha-D-galactose. The protein operates within carbohydrate metabolism; galactose metabolism. The protein is Galactose-1-phosphate uridylyltransferase (galT) of Thermotoga maritima (strain ATCC 43589 / DSM 3109 / JCM 10099 / NBRC 100826 / MSB8).